A 305-amino-acid chain; its full sequence is tRNA pseudouridine synthase B (305 aa).

D48 acts as the Nucleophile in catalysis.

Belongs to the pseudouridine synthase TruB family. Type 1 subfamily.

The enzyme catalyses uridine(55) in tRNA = pseudouridine(55) in tRNA. Its function is as follows. Responsible for synthesis of pseudouridine from uracil-55 in the psi GC loop of transfer RNAs. The sequence is that of tRNA pseudouridine synthase B from Actinobacillus pleuropneumoniae serotype 5b (strain L20).